The primary structure comprises 133 residues: Ribosome-binding factor A (133 aa).

It belongs to the RbfA family. Monomer. Binds 30S ribosomal subunits, but not 50S ribosomal subunits or 70S ribosomes.

Its subcellular location is the cytoplasm. In terms of biological role, one of several proteins that assist in the late maturation steps of the functional core of the 30S ribosomal subunit. Associates with free 30S ribosomal subunits (but not with 30S subunits that are part of 70S ribosomes or polysomes). Required for efficient processing of 16S rRNA. May interact with the 5'-terminal helix region of 16S rRNA. This Salmonella typhimurium (strain LT2 / SGSC1412 / ATCC 700720) protein is Ribosome-binding factor A.